We begin with the raw amino-acid sequence, 442 residues long: Threonine/serine transporter TdcC (442 aa).

11 helical membrane-spanning segments follow: residues 21 to 41 (TTWT…FFPI), 44 to 64 (GFGG…IAFL), 96 to 116 (GVVI…IYGV), 139 to 159 (VVAL…KDLM), 162 to 182 (VMSF…LSLI), 206 to 226 (ILVT…FSPI), 258 to 278 (ASIL…FTLS), 312 to 332 (ITLE…SFFG), 364 to 384 (LISM…NPNI), 388 to 408 (IEAM…MYAI), and 422 to 442 (ENYF…YKLL).

Belongs to the amino acid/polyamine transporter 2 family. SdaC/TdcC subfamily.

It is found in the cell inner membrane. The catalysed reaction is L-threonine(in) + H(+)(in) = L-threonine(out) + H(+)(out). It carries out the reaction L-serine(in) + H(+)(in) = L-serine(out) + H(+)(out). Functionally, involved in the import of threonine and serine into the cell, with the concomitant import of a proton (symport system). This is Threonine/serine transporter TdcC from Yersinia enterocolitica serotype O:8 / biotype 1B (strain NCTC 13174 / 8081).